The following is a 66-amino-acid chain: Large ribosomal subunit protein bL32 (66 aa).

Belongs to the bacterial ribosomal protein bL32 family.

The chain is Large ribosomal subunit protein bL32 from Rickettsia conorii (strain ATCC VR-613 / Malish 7).